A 497-amino-acid polypeptide reads, in one-letter code: Carboxylesterase (497 aa).

Catalysis depends on S185, which acts as the Acyl-ester intermediate. Active-site charge relay system residues include E319 and H415.

The protein belongs to the type-B carboxylesterase/lipase family.

It is found in the secreted. The catalysed reaction is a carboxylic ester + H2O = an alcohol + a carboxylate + H(+). This chain is Carboxylesterase, found in Thermobifida fusca (strain YX).